The sequence spans 882 residues: Valine--tRNA ligase (882 aa).

The 'HIGH' region signature appears at 42–52 (PNVTGKLHLGH). Residues 522–526 (KMSKS) carry the 'KMSKS' region motif. Residue Lys-525 participates in ATP binding. The stretch at 849–873 (KIEIEKKKYESYCKQYKKLLESKNN) forms a coiled coil.

Belongs to the class-I aminoacyl-tRNA synthetase family. ValS type 1 subfamily. As to quaternary structure, monomer.

The protein resides in the cytoplasm. The catalysed reaction is tRNA(Val) + L-valine + ATP = L-valyl-tRNA(Val) + AMP + diphosphate. Catalyzes the attachment of valine to tRNA(Val). As ValRS can inadvertently accommodate and process structurally similar amino acids such as threonine, to avoid such errors, it has a 'posttransfer' editing activity that hydrolyzes mischarged Thr-tRNA(Val) in a tRNA-dependent manner. The sequence is that of Valine--tRNA ligase from Onion yellows phytoplasma (strain OY-M).